Here is a 405-residue protein sequence, read N- to C-terminus: Replication factor C large subunit (405 aa).

47-54 serves as a coordination point for ATP; that stretch reads GPPGVGKT.

It belongs to the activator 1 small subunits family. RfcL subfamily. Heteromultimer composed of small subunits (RfcS) and large subunits (RfcL).

Its function is as follows. Part of the RFC clamp loader complex which loads the PCNA sliding clamp onto DNA. The polypeptide is Replication factor C large subunit (Saccharolobus islandicus (strain M.16.27) (Sulfolobus islandicus)).